The chain runs to 585 residues: MNIFALFETRVREALESLTRSGRLPEGLDLSRVVVEPPRDASHGDLATNAALVLAKEAKQNPKALGEALAEELRTDPRIVEASVAGPGFINLRLAPEVFQDVIRAALSEGENFGRGQMPGGPVNIEYVSANPTGPMHVGHGRGAVFGDALANLLAAAGRPVTREYYINDAGAQVDVLARSAYLRYREALGETITIPEGLYPGDYLKPVGMRLAETHGRALLDQPEHEWLPQVRRFAIDAMMAMIREDLAAIGIRHDVFFSEATLQGENGGKVAELLDALRQKGLVYEGRLPPPKGQLPDDWEDREQTLFRSSQFGDDVDRALLKSDGSFTYFASDIAYHRDKWLRGANELIDVLGADHGGYVKRMQAAVKAVSDGQARLDVKLCQLVRLLRAGEPVKMSKRAGEFVTLRDVIDEVGRDAIRFMMLYRKNDATLDFDLAKVVEQSKDNPVFYVQYGHARRFSVLRQAREALPGEDFSPAALLADADLSVLTDPGEIEMMRLIAQYPRVLESAAAAHEPHRIAFYLYETASSLHSFWNKGKDLPQLRIVNPTDRNSTRARLALVEALGGVLASGLAVLGVSAPNEMR.

A 'HIGH' region motif is present at residues 130–140 (ANPTGPMHVGH).

Belongs to the class-I aminoacyl-tRNA synthetase family. In terms of assembly, monomer.

It is found in the cytoplasm. The catalysed reaction is tRNA(Arg) + L-arginine + ATP = L-arginyl-tRNA(Arg) + AMP + diphosphate. The chain is Arginine--tRNA ligase from Methylorubrum extorquens (strain CM4 / NCIMB 13688) (Methylobacterium extorquens).